Consider the following 234-residue polypeptide: Sugar fermentation stimulation protein homolog (234 aa).

This sequence belongs to the SfsA family.

The chain is Sugar fermentation stimulation protein homolog from Shewanella frigidimarina (strain NCIMB 400).